The primary structure comprises 194 residues: Large ribosomal subunit protein eL15 (194 aa).

The disordered stretch occupies residues 164–194 (SAGKKGRGLRNKGKGAEKIRPSIRANEGKGK). The span at 167–176 (KKGRGLRNKG) shows a compositional bias: basic residues. The segment covering 177-194 (KGAEKIRPSIRANEGKGK) has biased composition (basic and acidic residues).

The protein belongs to the eukaryotic ribosomal protein eL15 family.

The sequence is that of Large ribosomal subunit protein eL15 (rpl15e) from Pyrococcus abyssi (strain GE5 / Orsay).